Consider the following 195-residue polypeptide: PBAN-type neuropeptides (195 aa).

An N-terminal signal peptide occupies residues 1–33 (MIGFAVFSSFNRFTTIFVCVLLCVVYLLSYASG). The propeptide occupies 34-63 (EYDGRDSSSGSNNDRAPSNEFGSCTDGKCI). Leu-80 is subject to Leucine amide. Positions 86–117 (ADRKPEINSDIEAFANAFEEPHWAIVTIPETE) are excised as a propeptide. Gln-120 carries the post-translational modification Pyrrolidone carboxylic acid. Leu-128 bears the Leucine amide mark. Positions 131–153 (ESGEDYFSYGFPKDQEELYTEEQ) are excised as a propeptide. A leucine amide mark is found at Leu-163 and Leu-175. The propeptide occupies 178-195 (QLHNIVDKPRQNFNDPRF).

Belongs to the pyrokinin family.

It is found in the secreted. A hormone that controls sex pheromone production in females and pheromone responsiveness in male. Also mediates visceral muscle contractile activity (myotropic activity). This is PBAN-type neuropeptides from Apis mellifera (Honeybee).